A 105-amino-acid polypeptide reads, in one-letter code: uncharacterized protein (105 aa).

The ABM domain maps to 14-104 (HYITACLKII…VEWLMKSNVN (91 aa)).

This is an uncharacterized protein from Bacillus subtilis (strain 168).